The chain runs to 431 residues: Enolase (431 aa).

Gln-166 provides a ligand contact to (2R)-2-phosphoglycerate. Glu-208 (proton donor) is an active-site residue. Mg(2+) contacts are provided by Asp-245, Glu-288, and Asp-315. 4 residues coordinate (2R)-2-phosphoglycerate: Lys-340, Arg-369, Ser-370, and Lys-391. Lys-340 functions as the Proton acceptor in the catalytic mechanism.

The protein belongs to the enolase family. Mg(2+) serves as cofactor.

The protein resides in the cytoplasm. It is found in the secreted. It localises to the cell surface. It catalyses the reaction (2R)-2-phosphoglycerate = phosphoenolpyruvate + H2O. The protein operates within carbohydrate degradation; glycolysis; pyruvate from D-glyceraldehyde 3-phosphate: step 4/5. Catalyzes the reversible conversion of 2-phosphoglycerate (2-PG) into phosphoenolpyruvate (PEP). It is essential for the degradation of carbohydrates via glycolysis. The sequence is that of Enolase from Clostridium botulinum (strain Okra / Type B1).